The sequence spans 424 residues: Gamma-glutamyl phosphate reductase (424 aa).

A disordered region spans residues 1–27; that stretch reads MSVEAQSRSGAVDTQEPADLREQVHSA.

It belongs to the gamma-glutamyl phosphate reductase family.

Its subcellular location is the cytoplasm. The enzyme catalyses L-glutamate 5-semialdehyde + phosphate + NADP(+) = L-glutamyl 5-phosphate + NADPH + H(+). It functions in the pathway amino-acid biosynthesis; L-proline biosynthesis; L-glutamate 5-semialdehyde from L-glutamate: step 2/2. In terms of biological role, catalyzes the NADPH-dependent reduction of L-glutamate 5-phosphate into L-glutamate 5-semialdehyde and phosphate. The product spontaneously undergoes cyclization to form 1-pyrroline-5-carboxylate. The polypeptide is Gamma-glutamyl phosphate reductase (Mycolicibacterium smegmatis (strain ATCC 700084 / mc(2)155) (Mycobacterium smegmatis)).